The primary structure comprises 530 residues: Putative ABC transporter ATP-binding protein SSO1893 (530 aa).

2 consecutive ABC transporter domains span residues 6–243 and 282–516; these read IRDL…LGLE and ILFA…EPPL. ATP contacts are provided by residues 38-45 and 314-321; these read GRSGSGKS and GKNGSGKT.

It belongs to the ABC transporter superfamily.

It is found in the cell membrane. Functionally, probably part of an ABC transporter complex. Responsible for energy coupling to the transport system. The protein is Putative ABC transporter ATP-binding protein SSO1893 of Saccharolobus solfataricus (strain ATCC 35092 / DSM 1617 / JCM 11322 / P2) (Sulfolobus solfataricus).